A 475-amino-acid polypeptide reads, in one-letter code: 23S rRNA (uracil(1939)-C(5))-methyltransferase RlmD (475 aa).

Basic residues predominate over residues 1–10 (MAMLGKRRPP). The tract at residues 1–33 (MAMLGKRRPPRTANERVRRERGSATRRDDATAD) is disordered. Over residues 13–30 (ANERVRRERGSATRRDDA) the composition is skewed to basic and acidic residues. A TRAM domain is found at 26–85 (RRDDATADGLSIERLAHDGRGVARDPHGKTVFVDQALPGERVRVAVHRQRKRFDEAHVVE). The [4Fe-4S] cluster site is built by Cys-98, Cys-104, Cys-107, and Cys-183. The S-adenosyl-L-methionine site is built by Gln-294, Phe-323, Asn-328, Glu-344, Asp-371, and Asp-388. Catalysis depends on Cys-414, which acts as the Nucleophile. A disordered region spans residues 455–475 (TRDTPRGRSTSVEREDHGQGP). Basic and acidic residues predominate over residues 457–475 (DTPRGRSTSVEREDHGQGP).

Belongs to the class I-like SAM-binding methyltransferase superfamily. RNA M5U methyltransferase family. RlmD subfamily.

It carries out the reaction uridine(1939) in 23S rRNA + S-adenosyl-L-methionine = 5-methyluridine(1939) in 23S rRNA + S-adenosyl-L-homocysteine + H(+). In terms of biological role, catalyzes the formation of 5-methyl-uridine at position 1939 (m5U1939) in 23S rRNA. This is 23S rRNA (uracil(1939)-C(5))-methyltransferase RlmD from Chromohalobacter salexigens (strain ATCC BAA-138 / DSM 3043 / CIP 106854 / NCIMB 13768 / 1H11).